The following is a 288-amino-acid chain: Dysbindin protein homolog (288 aa).

A coiled-coil region spans residues 147–239 (AQLQNSSQVL…QRERQAVFDD (93 aa)).

It belongs to the dysbindin family. Component of the biogenesis of lysosome-related organelles complex-1 (BLOC-1) composed of Blos1, Blos2, Blos3, Blos4, Dysb, Muted, Pldn and Snapin. Interacts with Pldn and Snapin.

Its function is as follows. Component of the biogenesis of lysosome-related organelles complex-1 (BLOC-1) involved in pigment granule biogenesis and membrane trafficking in synapses. In response to high synaptic activity at neuromuscular junctions, stabilizes Pldn protein levels and, together with Pldn, plays a role in promoting efficient synaptic vesicle recycling and re-formation through early endosomes. The polypeptide is Dysbindin protein homolog (Drosophila melanogaster (Fruit fly)).